Here is a 62-residue protein sequence, read N- to C-terminus: Conotoxin TeAr151 (62 aa).

Residues 1–22 (MRCLPVFVVLLLLIASAPSVDA) form the signal peptide. Residues 23-47 (QPKTKDDVPLAPLHDNIQNTLQTLR) constitute a propeptide that is removed on maturation. M55 is subject to Methionine sulfoxide; partial. Position 60 is a serine amide (S60).

Belongs to the conotoxin T superfamily. Contains 2 disulfide bonds. In terms of processing, contains 2 disulfide bonds that can be either 'C1-C3, C2-C4' or 'C1-C4, C2-C3', since these disulfide connectivities have been observed for conotoxins with cysteine framework V (for examples, see AC P0DQQ7 and AC P81755).. Expressed by the venom duct. Is mostly present in part 5 of the venom duct (distal part near the pharynx), and less abundantly present in part 4 of the venom duct.

The protein resides in the secreted. The chain is Conotoxin TeAr151 from Conus textile (Cloth-of-gold cone).